We begin with the raw amino-acid sequence, 181 residues long: MFGEQPGLQVDNQSGLFIEGAYVSRSDEGDGGIDIILVGSDPTFAGNDDQTTGEFLRGVSRYAYFTVPGHTPIKNGPFRLANDRDGSLFADRTVIVAAMTLALQSVQYLRHPLADVTMGYDPSAPKNLVAKAQKRGFDAQLELDWKGYPSLTILGADPAARKSSPVAARENDEEIVFGFGR.

This is an uncharacterized protein from Sinorhizobium fredii (strain NBRC 101917 / NGR234).